Consider the following 937-residue polypeptide: MMRWPPCSRPLLGVCTLLSLALLGHILLHDLEVVPRELRGFSQDEIHQACQPGASSPECRGSPRAAPTQCDLPPNSRFDCAPDKGITPQQCEARGCCYMPAEWPPDAQMGQPWCFFPPSYPSYRLENLTTTETGYTATLTRAVPTFFPKDIMTLRLDMLMETESRLHFTIKDPANRRYEVPLETPRVYSQAPFTLYSVEFSEEPFGVVVRRKLDGRVLLNTTVAPLFFADQFLQLSTSLPSQHITGLAEHLGSLMLSTNWTKITLWNRDIAPEPNVNLYGSHPFYLVLEDGGLAHGVFLLNSNAMDVVLQPSPALSWRSTGGILDVYIFLGPEPKSVVQQYLDVVGYPFMPPYWGLGFHLCRWGYSTSAITRQVVENMTRAYFPLDVQWNDLDYMDARRDFTFNKDHFGDFPAMVQELHQGGRRYIMIVDPAISSSGPAGTYRPYDEGLRRGVFITNETGQPLIGQVWPGLTAFPDFTNPETLDWWQDMVTEFHAQVPFDGMWIDMNEPSNFVRGSVDGCPDNSLENPPYLPGVVGGTLRAATICASSHQFLSTHYDLHNLYGLTEALASHRALVKARGMRPFVISRSTFAGHGRYSGHWTGDVWSNWEQLSYSVPEILLFNLLGVPLVGADICGFLGNTSEELCVRWTQLGAFYPFMRNHNALNSQPQEPYRFSETAQQAMRKAFTLRYVLLPYLYTLFHRAHVRGETVARPLFLEFPEDPSTWTVDRQLLWGEALLITPVLEAEKVEVTGYFPQGTWYDLQTVPMEAFGSLPPPAPLTSVIHSKGQWVTLSAPLDTINVHLRAGHIIPMQGPALTTTESRKQHMALAVALTASGEAQGELFWDDGESLGVLDGGDYTQLIFLAKNNTFVNKLVHVSSEGASLQLRNVTVLGVATAPQQVLCNSVPVSNFTFSPDTETLAIPVSLTMGEQFVISWS.

A signal peptide spans 1–23 (MMRWPPCSRPLLGVCTLLSLALL). The propeptide occupies 24–60 (GHILLHDLEVVPRELRGFSQDEIHQACQPGASSPECR). Residues 68–118 (TQCDLPPNSRFDCAPDKGITPQQCEARGCCYMPAEWPPDAQMGQPWCFFPP) enclose the P-type domain. 3 cysteine pairs are disulfide-bonded: cysteine 70–cysteine 97, cysteine 80–cysteine 96, and cysteine 91–cysteine 114. Asparagine 127, asparagine 220, asparagine 259, and asparagine 377 each carry an N-linked (GlcNAc...) asparagine glycan. Aspartate 391 is a binding site for substrate. N-linked (GlcNAc...) asparagine glycosylation is present at asparagine 457. Aspartate 505 serves as the catalytic Nucleophile. The active site involves glutamate 508. A disulfide bridge connects residues cysteine 520 and cysteine 545. 2 residues coordinate substrate: arginine 587 and aspartate 603. Cysteines 634 and 645 form a disulfide. Asparagine 639 carries an N-linked (GlcNAc...) asparagine glycan. Substrate is bound at residue histidine 661. Asparagine 867, asparagine 888, and asparagine 910 each carry an N-linked (GlcNAc...) asparagine glycan.

The protein belongs to the glycosyl hydrolase 31 family.

It is found in the lysosome. It localises to the lysosome membrane. The enzyme catalyses Hydrolysis of terminal, non-reducing (1-&gt;4)-linked alpha-D-glucose residues with release of alpha-D-glucose.. Essential for the degradation of glycogen in lysosomes. Has highest activity on alpha-1,4-linked glycosidic linkages, but can also hydrolyze alpha-1,6-linked glucans. The chain is Lysosomal alpha-glucosidase (GAA) from Bos taurus (Bovine).